A 314-amino-acid chain; its full sequence is S-methyl-5'-thioadenosine phosphorylase (314 aa).

Phosphate-binding positions include Ser31, Arg73–His74, and Ser106–Ala107. Met207 serves as a coordination point for substrate. Thr208 provides a ligand contact to phosphate. Asp231–Asp233 lines the substrate pocket.

Belongs to the PNP/MTAP phosphorylase family. MTAP subfamily. Homohexamer. Dimer of a homotrimer.

The catalysed reaction is S-methyl-5'-thioadenosine + phosphate = 5-(methylsulfanyl)-alpha-D-ribose 1-phosphate + adenine. Its pathway is amino-acid biosynthesis; L-methionine biosynthesis via salvage pathway; S-methyl-5-thio-alpha-D-ribose 1-phosphate from S-methyl-5'-thioadenosine (phosphorylase route): step 1/1. Its function is as follows. Catalyzes the reversible phosphorylation of S-methyl-5'-thioadenosine (MTA) to adenine and 5-methylthioribose-1-phosphate. Involved in the breakdown of MTA, a major by-product of polyamine biosynthesis. Responsible for the first step in the methionine salvage pathway after MTA has been generated from S-adenosylmethionine. Has broad substrate specificity with 6-aminopurine nucleosides as preferred substrates. The sequence is that of S-methyl-5'-thioadenosine phosphorylase from Prochlorococcus marinus (strain SARG / CCMP1375 / SS120).